The following is a 184-amino-acid chain: ATP synthase subunit b, chloroplastic (184 aa).

A helical transmembrane segment spans residues 27 to 49 (LATNLINLSVVLGVLIFFGKGVL).

The protein belongs to the ATPase B chain family. As to quaternary structure, F-type ATPases have 2 components, F(1) - the catalytic core - and F(0) - the membrane proton channel. F(1) has five subunits: alpha(3), beta(3), gamma(1), delta(1), epsilon(1). F(0) has four main subunits: a(1), b(1), b'(1) and c(10-14). The alpha and beta chains form an alternating ring which encloses part of the gamma chain. F(1) is attached to F(0) by a central stalk formed by the gamma and epsilon chains, while a peripheral stalk is formed by the delta, b and b' chains.

Its subcellular location is the plastid. It is found in the chloroplast thylakoid membrane. F(1)F(0) ATP synthase produces ATP from ADP in the presence of a proton or sodium gradient. F-type ATPases consist of two structural domains, F(1) containing the extramembraneous catalytic core and F(0) containing the membrane proton channel, linked together by a central stalk and a peripheral stalk. During catalysis, ATP synthesis in the catalytic domain of F(1) is coupled via a rotary mechanism of the central stalk subunits to proton translocation. Functionally, component of the F(0) channel, it forms part of the peripheral stalk, linking F(1) to F(0). This is ATP synthase subunit b, chloroplastic from Lactuca sativa (Garden lettuce).